The following is an 86-amino-acid chain: Myosuppressin (86 aa).

An N-terminal signal peptide occupies residues 1–18 (MAIFCNNVLAALPTQCNP). Positions 19–70 (GFLDDLPPRIRKVCVALSRIYELGSEMESYIGDKENHITGFHESIPLLDSGV) are excised as a propeptide. Residue Q73 is modified to Pyrrolidone carboxylic acid. Phenylalanine amide is present on F82.

It is found in the secreted. In terms of biological role, myoinhibiting neuropeptide. This Apis mellifera (Honeybee) protein is Myosuppressin.